Here is a 266-residue protein sequence, read N- to C-terminus: Apolipoprotein A-I (266 aa).

The signal sequence occupies residues 1 to 18 (MKAVVLTLAVLFLTGSQA). Tandem repeats lie at residues 67-88 (LKLLDNWDTLGSTVTKLREQIG) and 89-110 (PVTQEFWDNLEKETEVLRQEMS). The interval 67 to 266 (LKLLDNWDTL…DEATKKLNAQ (200 aa)) is 10 X approximate tandem repeats. Residue methionine 109 is modified to Methionine sulfoxide. One copy of the 3; half-length repeat lies at 111 to 121 (KDLEEVKQKVQ). 5 tandem repeats follow at residues 122-143 (PYLDDFQKKWQEEVELYRQKVA), 144-165 (PLGTELREGARQKLQELHEKLS), 166-187 (PLGEELRDRARTHVDALRAQLA), 188-209 (PYSDELRERLAARLQALKESGG), and 210-231 (ASLAEYHAKASEHLSTLSEKAK). A 9; half-length repeat occupies 232–242 (PALEDLRQGLL). Repeat 10 spans residues 243-266 (PVLESFKVGLMAIVDEATKKLNAQ).

It belongs to the apolipoprotein A1/A4/E family. In terms of assembly, homodimer. Interacts with APOA1BP and CLU. Component of a sperm activating protein complex (SPAP), consisting of APOA1, an immunoglobulin heavy chain, an immunoglobulin light chain and albumin. Interacts with NDRG1. Interacts with SCGB3A2. Interacts with NAXE and YJEFN3. Glycosylated. In terms of processing, palmitoylated. Post-translationally, phosphorylation sites are present in the extracellular medium.

The protein resides in the secreted. Its function is as follows. Participates in the reverse transport of cholesterol from tissues to the liver for excretion by promoting cholesterol efflux from tissues and by acting as a cofactor for the lecithin cholesterol acyltransferase (LCAT). As part of the SPAP complex, activates spermatozoa motility. The polypeptide is Apolipoprotein A-I (APOA1) (Acinonyx jubatus (Cheetah)).